Here is a 320-residue protein sequence, read N- to C-terminus: Ribosome production factor 2 homolog (320 aa).

The Brix domain occupies 30 to 234 (RTMLFLDGRK…IRRTKIASED (205 aa)). Positions 268–320 (LGKQQTGSIQTRRVKALRKTPEEKKENRQRKKVALKAAAAEALASQGNNPFSS) are disordered. Residues 302-311 (LKAAAAEALA) are compositionally biased toward low complexity.

It belongs to the RPF2 family.

Its subcellular location is the nucleus. The protein localises to the nucleolus. In terms of biological role, required for normal assembly of the mitotic spindle. May be involved in both centrosome-dependent and centrosome-independent spindle assembly programs. The sequence is that of Ribosome production factor 2 homolog from Drosophila melanogaster (Fruit fly).